The following is a 269-amino-acid chain: Ribosomal RNA small subunit methyltransferase A (269 aa).

The S-adenosyl-L-methionine site is built by asparagine 20, leucine 22, glycine 47, glutamate 68, aspartate 90, and asparagine 110.

The protein belongs to the class I-like SAM-binding methyltransferase superfamily. rRNA adenine N(6)-methyltransferase family. RsmA subfamily.

The protein localises to the cytoplasm. The enzyme catalyses adenosine(1518)/adenosine(1519) in 16S rRNA + 4 S-adenosyl-L-methionine = N(6)-dimethyladenosine(1518)/N(6)-dimethyladenosine(1519) in 16S rRNA + 4 S-adenosyl-L-homocysteine + 4 H(+). Functionally, specifically dimethylates two adjacent adenosines (A1518 and A1519) in the loop of a conserved hairpin near the 3'-end of 16S rRNA in the 30S particle. May play a critical role in biogenesis of 30S subunits. The protein is Ribosomal RNA small subunit methyltransferase A of Chlorobium phaeobacteroides (strain DSM 266 / SMG 266 / 2430).